Reading from the N-terminus, the 368-residue chain is 2-aminoethylphosphonate--pyruvate transaminase (368 aa).

Lys192 is modified (N6-(pyridoxal phosphate)lysine).

This sequence belongs to the class-V pyridoxal-phosphate-dependent aminotransferase family. PhnW subfamily. As to quaternary structure, homodimer. It depends on pyridoxal 5'-phosphate as a cofactor.

The enzyme catalyses (2-aminoethyl)phosphonate + pyruvate = phosphonoacetaldehyde + L-alanine. Functionally, involved in phosphonate degradation. The chain is 2-aminoethylphosphonate--pyruvate transaminase from Pseudomonas putida (strain ATCC 47054 / DSM 6125 / CFBP 8728 / NCIMB 11950 / KT2440).